Here is a 708-residue protein sequence, read N- to C-terminus: ATP-dependent RNA helicase laf-1 (708 aa).

Residues 1 to 21 (MESNQSNNGGSGNAALNRGGR) are compositionally biased toward low complexity. The segment at 1 to 191 (MESNQSNNGG…RGTSKWENRG (191 aa)) is disordered. Positions 48-70 (GAGGGGYRRGGGNSGGGGGGGYD) are enriched in gly residues. Composition is skewed to basic and acidic residues over residues 72–83 (GYNDNRDDRDNR) and 90–99 (GRDRNYEDRG). A compositionally biased stretch (gly residues) spans 100–123 (YNGGGGGGGNRGYNNNRGGGGGGY). Positions 231–259 (SLFSDLSLHEWIEENIKTAGYDRPTPVQK) match the Q motif motif. Residues 262–453 (IPALQGGRDL…QDFLKENYVF (192 aa)) form the Helicase ATP-binding domain. ATP is bound at residue 275–282 (AQTGSGKT). The DEAD box signature appears at 397–400 (DEAD). A Helicase C-terminal domain is found at 465-626 (NIMQKIVWVE…ELPDWLEGMS (162 aa)). The tract at residues 623–708 (EGMSGDMRSG…RAQPQQDWWS (86 aa)) is disordered. Gly residues-rich tracts occupy residues 630–647 (RSGGGYRGRGGRGNGQRF) and 656–692 (GGSGNGGGGNGGGGGFGGGGQRSGGGGGFQSGGGGGR). Positions 699-708 (RAQPQQDWWS) are enriched in polar residues.

It belongs to the DEAD box helicase family. DDX3/DED1 subfamily. As to quaternary structure, binds RNA as a monomer at low laf-1 concentrations and as a dimer at high laf-1 concentrations. As to expression, expressed in the germline and soma of young adult hermaphrodites.

The protein localises to the cytoplasm. The protein resides in the cytoplasmic granule. It is found in the nucleus. Its subcellular location is the stress granule. It localises to the inflammasome. The protein localises to the cell membrane. The protein resides in the cell projection. It is found in the lamellipodium. The catalysed reaction is ATP + H2O = ADP + phosphate + H(+). Multifunctional ATP-dependent RNA helicase. Plays a role in RNA remodeling, but is not required for RNA unwinding. Binds to RNA in a concentration-dependent manner to stimulate annealing between two complementary strands of RNA. This process is also dependent upon ATP; ATP reduces binding to RNA and subsequently diminishes RNA annealing. Involved in many cellular processes, which do not necessarily require its ATPase/helicase catalytic activities. Involved in the regulation of transcription and translation initiation. Involved in innate immunity. Involved in both stress and inflammatory responses. Promotes liquid-liquid phase separation of P granules, which is a process important for intracellular organization and stress granule assembly. Required for embryonic development. Plays a role in sexual cell fate determination by negatively regulating the translation of the sex determining protein tra-2. May play a protective role in the response to heat and oxidative stress. May negatively regulate extrinsic apoptotic signaling pathway via death domain receptors. May be involved in mitotic chromosome segregation. This chain is ATP-dependent RNA helicase laf-1, found in Caenorhabditis elegans.